The following is a 281-amino-acid chain: Para-Rep C9 (281 aa).

A CRESS-DNA virus Rep endonuclease domain is found at 1-95; sequence MSAVNWVFTL…VAGPWSYGEL (95 aa). An RCR-1 motif is present at residues 7–10; it reads VFTL. A divalent metal cation-binding residues include Glu-33 and His-39. Residues 39–41 carry the RCR-2 motif; sequence HIQ. Positions 48–69 match the Nuclear localization signal motif; that stretch reads KKAKMNTVKNIIGGNPHLEKMK. The For DNA cleavage activity role is filled by Tyr-78. The RCR-3 motif lies at 78 to 81; it reads YAQK. An a divalent metal cation-binding site is contributed by Glu-83. The short motif at 95–101 is the Nuclear localization signal element; it reads LLKKGSH. 178-180 contacts ATP; the sequence is GKS.

Belongs to the nanoviridea/circoviridae replication-associated protein family. In terms of assembly, homooligomer (Potential). Rep binds to repeated DNA motifs (iterons). Requires Mg(2+) as cofactor. Mn(2+) is required as a cofactor.

The protein resides in the host nucleus. It catalyses the reaction ATP + H2O = ADP + phosphate + H(+). Functionally, initiates and terminates the replication only of its own subviral DNA molecule. The closed circular ssDNA genome is first converted to a superhelical dsDNA. Rep binds a specific hairpin at the genome origin of replication. Introduces an endonucleolytic nick within the intergenic region of the genome, thereby initiating the rolling circle replication (RCR). Following cleavage, binds covalently to the 5'-phosphate of DNA as a tyrosyl ester. The cleavage gives rise to a free 3'-OH that serves as a primer for the cellular DNA polymerase. The polymerase synthesizes the (+) strand DNA by rolling circle mechanism. After one round of replication, a Rep-catalyzed nucleotidyl transfer reaction releases a circular single-stranded virus genome, thereby terminating the replication. Displays origin-specific DNA cleavage, nucleotidyl transferase, ATPase and helicase activities. The polypeptide is Para-Rep C9 (C9) (Faba bean necrotic yellows C9 alphasatellite (FBNYC9A)).